We begin with the raw amino-acid sequence, 165 residues long: Small ribosomal subunit protein uS5 (165 aa).

The region spanning 10-73 (LVEKLVAVDR…EAARRNMITV (64 aa)) is the S5 DRBM domain.

It belongs to the universal ribosomal protein uS5 family. In terms of assembly, part of the 30S ribosomal subunit. Contacts proteins S4 and S8.

Its function is as follows. With S4 and S12 plays an important role in translational accuracy. In terms of biological role, located at the back of the 30S subunit body where it stabilizes the conformation of the head with respect to the body. The chain is Small ribosomal subunit protein uS5 from Acinetobacter baumannii (strain AB307-0294).